The chain runs to 350 residues: Cytochrome c biogenesis protein CcsA (350 aa).

Transmembrane regions (helical) follow at residues 23 to 43 (NVAFAISLGAMLFYWGGAAFP), 47 to 67 (LLAELGLAGMIGANLTMAALL), 82 to 102 (LYESLFFLAWGITALHLLALH), 108 to 128 (WVGVMTAPVVTGIVAFAALVL), 153 to 173 (VMLLAYAALLVGSLLSISFLI), 258 to 278 (LIGLGFPLLTIGIIAGAVWAN), 293 to 313 (WALITWLVFAAYLHARITKGW), and 319 to 339 (ALLASLGFGVVWVCYLGVNFL).

It belongs to the CcmF/CycK/Ccl1/NrfE/CcsA family. May interact with ccs1.

It localises to the cellular thylakoid membrane. Functionally, required during biogenesis of c-type cytochromes (cytochrome c6 and cytochrome f) at the step of heme attachment. This chain is Cytochrome c biogenesis protein CcsA, found in Synechococcus sp. (strain JA-2-3B'a(2-13)) (Cyanobacteria bacterium Yellowstone B-Prime).